The chain runs to 448 residues: Cysteine--tRNA ligase (448 aa).

Cys-27 contacts Zn(2+). The 'HIGH' region motif lies at 29–39 (PTVYNYIHVGN). Zn(2+)-binding residues include Cys-210, His-235, and Glu-239. The 'KMSKS' region signature appears at 267–271 (KMSKS). Lys-270 serves as a coordination point for ATP.

This sequence belongs to the class-I aminoacyl-tRNA synthetase family. In terms of assembly, monomer. Zn(2+) is required as a cofactor.

The protein localises to the cytoplasm. The enzyme catalyses tRNA(Cys) + L-cysteine + ATP = L-cysteinyl-tRNA(Cys) + AMP + diphosphate. The sequence is that of Cysteine--tRNA ligase from Lactococcus lactis subsp. lactis (strain IL1403) (Streptococcus lactis).